Reading from the N-terminus, the 488-residue chain is V-type proton ATPase subunit B 1 (488 aa).

It belongs to the ATPase alpha/beta chains family. As to quaternary structure, V-ATPase is a heteromultimeric enzyme composed of a peripheral catalytic V1 complex (main components: subunits A, B, C, D, E, and F) attached to an integral membrane V0 proton pore complex (main component: the proteolipid protein).

In terms of biological role, non-catalytic subunit of the peripheral V1 complex of vacuolar ATPase. V-ATPase is responsible for acidifying a variety of intracellular compartments in eukaryotic cells. The polypeptide is V-type proton ATPase subunit B 1 (Gossypium hirsutum (Upland cotton)).